Consider the following 511-residue polypeptide: Lysine--tRNA ligase 2 (511 aa).

The segment covering 1-11 (MTMEINNTDPS) has biased composition (polar residues). Residues 1 to 21 (MTMEINNTDPSENMPLPDDVD) are disordered. Residues Glu-421 and Glu-428 each coordinate Mg(2+).

This sequence belongs to the class-II aminoacyl-tRNA synthetase family. Homodimer. Requires Mg(2+) as cofactor.

The protein localises to the cytoplasm. The catalysed reaction is tRNA(Lys) + L-lysine + ATP = L-lysyl-tRNA(Lys) + AMP + diphosphate. The protein is Lysine--tRNA ligase 2 of Methanosarcina acetivorans (strain ATCC 35395 / DSM 2834 / JCM 12185 / C2A).